We begin with the raw amino-acid sequence, 435 residues long: tRNA modification GTPase MnmE (435 aa).

Residues arginine 24, glutamate 82, and lysine 122 each contribute to the (6S)-5-formyl-5,6,7,8-tetrahydrofolate site. One can recognise a TrmE-type G domain in the interval 219–360 (GFIIAIAGPP…LIAEMERRLG (142 aa)). Residue asparagine 229 participates in K(+) binding. GTP is bound by residues 229–234 (NAGKST), 248–254 (SPVPGTT), and 273–276 (DTAG). Residue serine 233 coordinates Mg(2+). Residues serine 248, valine 250, and threonine 253 each coordinate K(+). Threonine 254 serves as a coordination point for Mg(2+). Lysine 435 is a (6S)-5-formyl-5,6,7,8-tetrahydrofolate binding site.

This sequence belongs to the TRAFAC class TrmE-Era-EngA-EngB-Septin-like GTPase superfamily. TrmE GTPase family. Homodimer. Heterotetramer of two MnmE and two MnmG subunits. Requires K(+) as cofactor.

It is found in the cytoplasm. Its function is as follows. Exhibits a very high intrinsic GTPase hydrolysis rate. Involved in the addition of a carboxymethylaminomethyl (cmnm) group at the wobble position (U34) of certain tRNAs, forming tRNA-cmnm(5)s(2)U34. The polypeptide is tRNA modification GTPase MnmE (Azorhizobium caulinodans (strain ATCC 43989 / DSM 5975 / JCM 20966 / LMG 6465 / NBRC 14845 / NCIMB 13405 / ORS 571)).